Reading from the N-terminus, the 175-residue chain is Adenine phosphoribosyltransferase (175 aa).

It belongs to the purine/pyrimidine phosphoribosyltransferase family. In terms of assembly, homodimer.

It is found in the cytoplasm. It catalyses the reaction AMP + diphosphate = 5-phospho-alpha-D-ribose 1-diphosphate + adenine. Its pathway is purine metabolism; AMP biosynthesis via salvage pathway; AMP from adenine: step 1/1. Its function is as follows. Catalyzes a salvage reaction resulting in the formation of AMP, that is energically less costly than de novo synthesis. The protein is Adenine phosphoribosyltransferase of Caldicellulosiruptor saccharolyticus (strain ATCC 43494 / DSM 8903 / Tp8T 6331).